The sequence spans 622 residues: Prothrombin (622 aa).

An N-terminal signal peptide occupies residues 1-24 (MAHVRGLQLPGCLALAALCSLVHS). A propeptide spanning residues 25–43 (QHVFLAPQQARSLLQRVRR) is cleaved from the precursor. In terms of domain architecture, Gla spans 44-89 (ANTFLEEVRKGNLERECVEETCSYEEAFEALESSTATDVFWAKYTA). 4-carboxyglutamate is present on residues E49, E50, E57, E59, E62, E63, E68, E69, E72, and E75. A disulfide bridge links C60 with C65. 11 disulfides stabilise this stretch: C90–C103, C108–C186, C129–C169, C157–C181, C213–C291, C234–C274, C262–C286, C336–C482, C391–C407, C536–C550, and C564–C594. 2 Kringle domains span residues 108–186 (CAEG…IPVC) and 213–291 (CVPD…LNYC). N121 and N143 each carry an N-linked (GlcNAc...) (complex) asparagine glycan. Positions 364–618 (IVEGSDAEIG…LKKWIQKVID (255 aa)) constitute a Peptidase S1 domain. The active-site Charge relay system is the H406. N416 is a glycosylation site (N-linked (GlcNAc...) (complex) asparagine). Catalysis depends on D462, which acts as the Charge relay system. The interval 551 to 573 (AGYKPDEGKRGDACEGDSGGPFV) is high affinity receptor-binding region which is also known as the TP508 peptide. The active-site Charge relay system is the S568.

Belongs to the peptidase S1 family. As to quaternary structure, heterodimer (named alpha-thrombin) of a light and a heavy chain; disulfide-linked. Forms a heterodimer with SERPINA5. In plasma, interacts (via N-terminus) with alpha-1-microglobulin with molar ratio 1:2 and 1:1; this interaction does not prevent the activation of prothrombin to thrombin. Interacts (thrombin) with iripin-8, a serine protease inhibitor from Ixodes ricinus saliva. Interacts (thrombin) with iripin-3, a serine protease inhibitor from Ixodes ricinus saliva. Interacts (thrombin) with Anopheles albimanus salivary thrombin inhibitor anophelin; the interaction results in thrombin inhibition. Interacts (thrombin) with Anopheles gambiae salivary thrombin inhibitor anophelin; the interaction results in thrombin inhibition. Interacts (thrombin) with Amblyomma variegatum variegin; the interaction results in thrombin inhibition. Interacts (thrombin) with Xenopsylla cheopis salivary thrombin inhibitor XC-42. Interacts (thrombin) with Xenopsylla cheopis salivary thrombin inhibitor XC-43. Post-translationally, the gamma-carboxyglutamyl residues, which bind calcium ions, result from the carboxylation of glutamyl residues by a microsomal enzyme, the vitamin K-dependent carboxylase. The modified residues are necessary for the calcium-dependent interaction with a negatively charged phospholipid surface, which is essential for the conversion of prothrombin to thrombin. In terms of processing, N-glycosylated. N-glycan heterogeneity at Asn-121: Hex3HexNAc3 (minor), Hex4HexNAc3 (minor) and Hex5HexNAc4 (major). At Asn-143: Hex4HexNAc3 (minor) and Hex5HexNAc4 (major). In the penultimate step of the coagulation cascade, prothrombin is converted to thrombin by the prothrombinase complex composed of factor Xa (F10), cofactor Va (F5), and phospholipids. This activation requires factor Xa-catalyzed sequential cleavage at 2 sites, Arg-314 and Arg-363, along 2 possible pathways. In the first pathway, the first cleavage occurs at Arg-314, leading to the formation of the inactive intermediate prethrombin-2. This pathway preferentially occurs on platelets and in the absence of cofactor Va. In the second pathway, the first cleavage occurs at Arg-363, which separates protease domain into 2 chains that remain connected through a disulfide bond and generates the active intermediate meizothrombin. The presence of cofactor Va directs activation along the meizothrombin pathway and greatly accelerates the rate of cleavage at Arg-363, but has a smaller effect on the cleavage of meizothrombin at Arg-314. Meizothrombin accumulates as an intermediate when prothrombinase is assembled on the membrane of red blood cells. In terms of tissue distribution, expressed by the liver and secreted in plasma.

It localises to the secreted. Its subcellular location is the extracellular space. The catalysed reaction is Selective cleavage of Arg-|-Gly bonds in fibrinogen to form fibrin and release fibrinopeptides A and B.. Its activity is regulated as follows. Activity is promoted in the presence of negatively charged surfaces, such as polyphosphate and dextran sulfate. Inhibited by SERPINA5. Its function is as follows. Thrombin, which cleaves bonds after Arg and Lys, converts fibrinogen to fibrin and activates factors V, VII, VIII, XIII, and, in complex with thrombomodulin, protein C. Functions in blood homeostasis, inflammation and wound healing. Activates coagulation factor XI (F11); activation is promoted by the contact with negatively charged surfaces. Triggers the production of pro-inflammatory cytokines, such as MCP-1/CCL2 and IL8/CXCL8, in endothelial cells. This chain is Prothrombin (F2), found in Homo sapiens (Human).